The following is a 724-amino-acid chain: Ribosomal protein S6 kinase alpha-1 (724 aa).

Ser-54 carries the post-translational modification Phosphoserine. The Protein kinase 1 domain occupies Phe-62–Tyr-310. ATP-binding positions include Leu-68 to Val-76 and Lys-94. Catalysis depends on Asp-187, which acts as the Proton acceptor. Residue Ser-221 is modified to Phosphoserine; by PDPK1. Ser-296 is subject to Phosphoserine. One can recognise an AGC-kinase C-terminal domain in the interval Ser-311–Gly-380. At Thr-348 the chain carries Phosphothreonine. Residues Ser-352, Ser-358, and Ser-369 each carry the phosphoserine modification. Residues Tyr-407 to Ile-664 enclose the Protein kinase 2 domain. ATP contacts are provided by residues Ile-413–Cys-421 and Lys-436. Asp-524 functions as the Proton acceptor in the catalytic mechanism. At Thr-562 the chain carries Phosphothreonine. Ser-721 bears the Phosphoserine mark.

It belongs to the protein kinase superfamily. AGC Ser/Thr protein kinase family. S6 kinase subfamily. Forms a complex with either MAPK1/ERK2 or MAPK3/ERK1 in quiescent cells. Transiently dissociates following mitogenic stimulation. Interacts with ETV1/ER81 and FGFR1. Requires Mg(2+) as cofactor. Activated by phosphorylation at Ser-221 by PDPK1. Autophosphorylated on Ser-369, as part of the activation process. May be phosphorylated at Thr-348 and Ser-352 by MAPK1/ERK2 and MAPK3/ERK1. Post-translationally, N-terminal myristoylation results in an activated kinase in the absence of added growth factors. Intestine, thymus, and lung.

The protein localises to the nucleus. It localises to the cytoplasm. It catalyses the reaction L-seryl-[protein] + ATP = O-phospho-L-seryl-[protein] + ADP + H(+). The catalysed reaction is L-threonyl-[protein] + ATP = O-phospho-L-threonyl-[protein] + ADP + H(+). With respect to regulation, upon extracellular signal or mitogen stimulation, phosphorylated at Thr-562 in the C-terminal kinase domain (CTKD) by MAPK1/ERK2 and MAPK3/ERK1. The activated CTKD then autophosphorylates Ser-369, allowing binding of PDPK1, which in turn phosphorylates Ser-221 in the N-terminal kinase domain (NTDK) leading to the full activation of the protein and subsequent phosphorylation of the substrates by the NTKD. Functionally, serine/threonine-protein kinase that acts downstream of ERK (MAPK1/ERK2 and MAPK3/ERK1) signaling and mediates mitogenic and stress-induced activation of the transcription factors CREB1, ETV1/ER81 and NR4A1/NUR77, regulates translation through RPS6 and EIF4B phosphorylation, and mediates cellular proliferation, survival, and differentiation by modulating mTOR signaling and repressing pro-apoptotic function of BAD and DAPK1. In fibroblast, is required for EGF-stimulated phosphorylation of CREB1, which results in the subsequent transcriptional activation of several immediate-early genes. In response to mitogenic stimulation (EGF and PMA), phosphorylates and activates NR4A1/NUR77 and ETV1/ER81 transcription factors and the cofactor CREBBP. Upon insulin-derived signal, acts indirectly on the transcription regulation of several genes by phosphorylating GSK3B at 'Ser-9' and inhibiting its activity. Phosphorylates RPS6 in response to serum or EGF via an mTOR-independent mechanism and promotes translation initiation by facilitating assembly of the pre-initiation complex. In response to insulin, phosphorylates EIF4B, enhancing EIF4B affinity for the EIF3 complex and stimulating cap-dependent translation. Is involved in the mTOR nutrient-sensing pathway by directly phosphorylating TSC2 at 'Ser-1798', which potently inhibits TSC2 ability to suppress mTOR signaling, and mediates phosphorylation of RPTOR, which regulates mTORC1 activity and may promote rapamycin-sensitive signaling independently of the PI3K/AKT pathway. Also involved in feedback regulation of mTORC1 and mTORC2 by phosphorylating DEPTOR. Mediates cell survival by phosphorylating the pro-apoptotic proteins BAD and DAPK1 and suppressing their pro-apoptotic function. Promotes the survival of hepatic stellate cells by phosphorylating CEBPB in response to the hepatotoxin carbon tetrachloride (CCl4). Mediates induction of hepatocyte prolifration by TGFA through phosphorylation of CEBPB. Is involved in cell cycle regulation by phosphorylating the CDK inhibitor CDKN1B, which promotes CDKN1B association with 14-3-3 proteins and prevents its translocation to the nucleus and inhibition of G1 progression. Phosphorylates EPHA2 at 'Ser-897', the RPS6KA-EPHA2 signaling pathway controls cell migration. In response to mTORC1 activation, phosphorylates EIF4B at 'Ser-406' and 'Ser-422' which stimulates bicarbonate cotransporter SLC4A7 mRNA translation, increasing SLC4A7 protein abundance and function. The protein is Ribosomal protein S6 kinase alpha-1 (Rps6ka1) of Mus musculus (Mouse).